Here is a 120-residue protein sequence, read N- to C-terminus: MANPTQLYRRNSTWRKNVLRSLSTEIIVNGKITTTLTRAKELRKVVDKLITKGKKNTLASRRLAAASMRKIKTKDGTDALKYLFDTLAPKYKNRNGGYTRIIKLPPRQGDNTKMAIIELV.

Belongs to the bacterial ribosomal protein bL17 family. Part of the 50S ribosomal subunit. Contacts protein L32.

This Mycoplasmopsis pulmonis (strain UAB CTIP) (Mycoplasma pulmonis) protein is Large ribosomal subunit protein bL17.